We begin with the raw amino-acid sequence, 197 residues long: Glycerol-3-phosphate acyltransferase (197 aa).

The next 4 membrane-spanning stretches (helical) occupy residues 1 to 21 (MTAL…GLLV), 69 to 89 (LPML…AVVG), 110 to 130 (VMLF…LVVL), and 152 to 172 (VFFT…SFIF).

This sequence belongs to the PlsY family. As to quaternary structure, probably interacts with PlsX.

The protein resides in the cell membrane. It carries out the reaction an acyl phosphate + sn-glycerol 3-phosphate = a 1-acyl-sn-glycero-3-phosphate + phosphate. It functions in the pathway lipid metabolism; phospholipid metabolism. Functionally, catalyzes the transfer of an acyl group from acyl-phosphate (acyl-PO(4)) to glycerol-3-phosphate (G3P) to form lysophosphatidic acid (LPA). This enzyme utilizes acyl-phosphate as fatty acyl donor, but not acyl-CoA or acyl-ACP. This is Glycerol-3-phosphate acyltransferase from Geobacillus kaustophilus (strain HTA426).